The following is a 256-amino-acid chain: Short-chain dehydrogenase/reductase cdmF (256 aa).

Val-11, Asp-57, and Arg-119 together coordinate NADP(+). Ser-137 functions as the Proton donor in the catalytic mechanism. 4 residues coordinate NADP(+): Tyr-151, Lys-155, Gly-183, and Asn-187. The active-site Proton acceptor is the Tyr-151. Lys-155 functions as the Lowers pKa of active site Tyr in the catalytic mechanism.

It belongs to the short-chain dehydrogenases/reductases (SDR) family.

It catalyses the reaction 3-hydroxypentacecilide A + A = chrodrimanin C + AH2. It carries out the reaction chrodrimanin F + A = chrodrimanin H + AH2. Its pathway is secondary metabolite biosynthesis; terpenoid biosynthesis. Short-chain dehydrogenase/reductase; part of the gene cluster that mediates the biosynthesis of chrodrimanin B, a meroterpenoid that acts as a potent blocker of insect GABA-gated chloride channels. The first step of the pathway is the biosynthesis of 6-hydroxymellein by the polyketide synthase cdmE. The prenyltransferase cdmH acts as a 6-hydroxymellein 5-farnesyltransferase and produces the hydrophobic metabolite verruculide C. The FAD-dependent monooxygenase cdmI further converts verruculide C into verruculide B. The terpene cyclase cdmG then produced the pentacyclic molecule 3-hydroxypentacecilide A, the backbone structure of chrodrimanin B, via folding the farnesyl moiety of the substrate into the chair-boat conformation. The short-chain dehydrogenase/reductase cdmF functions as the 3-OH dehydrogenase that oxidizes the C-3 hydroxyl group of 3-hydroxypentacecilide A and produces chrodrimanin C, the dehydrogenated product of 3-hydroxypentacecilide A. The cytochrome P450 monooxygenase cdmJ then accepts both 3-hydroxypentacecilide A and chrodrimanin C and functions as a C-7-beta-hydroxylase to produce respectively chrodrimanin H and chrodrimanin F. The dioxygenase cdmA accepts chrodrimanin H to afford chrodrimanin E, which is further transformed to chrodrimanin A by the dioxygenase cdmD. CdmA can also accept chrodrimanin C as substrate to convert it into verruculide A, which is further converted into chrodrimanin T by cdmD. The last step of the biosynthesis is proposed to be performed by the acetyltransferase cdmC which acetylates chrodrimanin A to yield chrodrimanin B. The pathway may also lead to the production of additional shunt products, including chrodrimanins T and U. The polypeptide is Short-chain dehydrogenase/reductase cdmF (Talaromyces verruculosus (Penicillium verruculosum)).